The sequence spans 277 residues: Sarcosine/dimethylglycine N-methyltransferase (277 aa).

Belongs to the methyltransferase superfamily. As to quaternary structure, monomer.

It catalyses the reaction sarcosine + 2 S-adenosyl-L-methionine = glycine betaine + 2 S-adenosyl-L-homocysteine + 2 H(+). It carries out the reaction sarcosine + S-adenosyl-L-methionine = N,N-dimethylglycine + S-adenosyl-L-homocysteine + H(+). The catalysed reaction is N,N-dimethylglycine + S-adenosyl-L-methionine = glycine betaine + S-adenosyl-L-homocysteine + H(+). It participates in amine and polyamine biosynthesis; betaine biosynthesis via glycine pathway; betaine from glycine: step 2/3. The protein operates within amine and polyamine biosynthesis; betaine biosynthesis via glycine pathway; betaine from glycine: step 3/3. Inhibited by n-butylic acid and S-adenosyl-L-homocysteine. Functionally, catalyzes the methylation of sarcosine and dimethylglycine to dimethylglycine and betaine, respectively, with S-adenosylmethionine (AdoMet) acting as the methyl donor. Activity with sarcosine is much weaker than activity with dimethylglycine. The sequence is that of Sarcosine/dimethylglycine N-methyltransferase from Aphanothece halophytica.